A 264-amino-acid chain; its full sequence is B3-hordein (264 aa).

Low complexity predominate over residues 1-15; sequence QQPVSRQPQQIIPQQ. Positions 1-66 are disordered; sequence QQPVSRQPQQ…QQPFPQQPPF (66 aa). Composition is skewed to pro residues over residues 16 to 44 and 52 to 64; these read PQQP…PYPQ and QPFP…PQQP.

This sequence belongs to the gliadin/glutenin family. Developing endosperm.

In terms of biological role, sulfur-rich seed storage protein. This chain is B3-hordein, found in Hordeum vulgare (Barley).